Here is a 358-residue protein sequence, read N- to C-terminus: Fructose-bisphosphate aldolase 3, cytoplasmic (358 aa).

R39 lines the substrate pocket. Residue E183 is the Proton acceptor of the active site. Catalysis depends on K225, which acts as the Schiff-base intermediate with dihydroxyacetone-P. Substrate is bound by residues 266–268 (SGG) and R298.

This sequence belongs to the class I fructose-bisphosphate aldolase family. Homotetramer.

It is found in the cytoplasm. The protein resides in the cytosol. The enzyme catalyses beta-D-fructose 1,6-bisphosphate = D-glyceraldehyde 3-phosphate + dihydroxyacetone phosphate. It functions in the pathway carbohydrate degradation; glycolysis; D-glyceraldehyde 3-phosphate and glycerone phosphate from D-glucose: step 4/4. Functionally, fructose-bisphosphate aldolase that plays a key role in glycolysis and gluconeogenesis. This Oryza sativa subsp. japonica (Rice) protein is Fructose-bisphosphate aldolase 3, cytoplasmic.